The following is a 551-amino-acid chain: Probable 4-coumarate--CoA ligase 3 (551 aa).

Positions 205, 206, 207, 208, 209, and 213 each coordinate ATP. Phenylalanine 253 contacts (E)-4-coumaroyl-AMP. Lysine 274 is a binding site for CoA. Residues glutamate 276–glutamine 346 are SBD1. (E)-4-coumaroyl-AMP-binding residues include alanine 323, glutamine 346, glycine 347, and threonine 351. ATP is bound by residues glutamine 346, glycine 347, threonine 351, aspartate 430, and arginine 445. The segment at glycine 347–tyrosine 409 is SBD2. Residues lysine 447 and lysine 451 each contribute to the (E)-4-coumaroyl-AMP site. Residues lysine 453 and glycine 454 each coordinate CoA. ATP is bound at residue lysine 537.

It belongs to the ATP-dependent AMP-binding enzyme family. It depends on Mg(2+) as a cofactor.

The catalysed reaction is (E)-4-coumarate + ATP + CoA = (E)-4-coumaroyl-CoA + AMP + diphosphate. It catalyses the reaction (E)-4-coumarate + ATP + H(+) = (E)-4-coumaroyl-AMP + diphosphate. The enzyme catalyses (E)-4-coumaroyl-AMP + CoA = (E)-4-coumaroyl-CoA + AMP + H(+). Its pathway is phytoalexin biosynthesis; 3,4',5-trihydroxystilbene biosynthesis; 3,4',5-trihydroxystilbene from trans-4-coumarate: step 1/2. Its function is as follows. Carboxylate--CoA ligase that may use 4-coumarate as substrate. Follows a two-step reaction mechanism, wherein the carboxylate substrate first undergoes adenylation by ATP, followed by a thioesterification in the presence of CoA to yield the final CoA thioester. The chain is Probable 4-coumarate--CoA ligase 3 (4cl3) from Dictyostelium discoideum (Social amoeba).